The following is a 692-amino-acid chain: Elongation factor G (692 aa).

One can recognise a tr-type G domain in the interval 8–282 (AKTRNIGIMA…AVIAYLPSPL (275 aa)). Residues 17 to 24 (AHVDAGKT), 81 to 85 (DTPGH), and 135 to 138 (NKMD) contribute to the GTP site.

Belongs to the TRAFAC class translation factor GTPase superfamily. Classic translation factor GTPase family. EF-G/EF-2 subfamily.

Its subcellular location is the cytoplasm. Catalyzes the GTP-dependent ribosomal translocation step during translation elongation. During this step, the ribosome changes from the pre-translocational (PRE) to the post-translocational (POST) state as the newly formed A-site-bound peptidyl-tRNA and P-site-bound deacylated tRNA move to the P and E sites, respectively. Catalyzes the coordinated movement of the two tRNA molecules, the mRNA and conformational changes in the ribosome. The polypeptide is Elongation factor G (Streptococcus pyogenes serotype M49 (strain NZ131)).